The following is a 739-amino-acid chain: DEAD-box ATP-dependent RNA helicase 32 (739 aa).

The short motif at 71–99 is the Q motif element; that stretch reads RKFAQLPISDKTKRGLKDAKYVDMTDVQS. Residues 102–277 enclose the Helicase ATP-binding domain; the sequence is IPHALCGRDI…RLSLRDPEYI (176 aa). 115 to 122 serves as a coordination point for ATP; sequence ARTGSGKT. A DEAD box motif is present at residues 225–228; the sequence is DEAD. The Helicase C-terminal domain maps to 303-461; it reads KLDMLWSFIK…EVSRLLAALL (159 aa). Residues 643–689 adopt a coiled-coil conformation; sequence GAEMRKADIEDKKVDKERRREKRMKQKIKRKRGAMEDEEEEEEEDHD. The interval 656-725 is disordered; sequence VDKERRREKR…GGKINTDSLS (70 aa). Residues 661–674 are compositionally biased toward basic residues; sequence RREKRMKQKIKRKR. Positions 678–688 are enriched in acidic residues; that stretch reads EDEEEEEEEDH.

This sequence belongs to the DEAD box helicase family. DDX10/DBP4 subfamily.

The catalysed reaction is ATP + H2O = ADP + phosphate + H(+). This Arabidopsis thaliana (Mouse-ear cress) protein is DEAD-box ATP-dependent RNA helicase 32 (RH32).